The chain runs to 1606 residues: Pentafunctional AROM polypeptide (1606 aa).

The 3-dehydroquinate synthase stretch occupies residues 1–390; the sequence is MANADVLKVS…YEPKATVVPD (390 aa). NAD(+) is bound by residues 45–47, 85–88, 116–118, and aspartate 121; these read DTN, ETSK, and GGV. Arginine 132 lines the 7-phospho-2-dehydro-3-deoxy-D-arabino-heptonate pocket. 141–142 contacts NAD(+); the sequence is TT. Positions 148 and 154 each coordinate 7-phospho-2-dehydro-3-deoxy-D-arabino-heptonate. Lysine 163 is an NAD(+) binding site. Asparagine 164 is a binding site for 7-phospho-2-dehydro-3-deoxy-D-arabino-heptonate. Residues 181–184 and asparagine 192 contribute to the NAD(+) site; that span reads FLET. Glutamate 196 is a binding site for Zn(2+). 7-phospho-2-dehydro-3-deoxy-D-arabino-heptonate-binding positions include 196 to 199 and lysine 256; that span reads EVVK. Residue glutamate 266 is the Proton acceptor; for 3-dehydroquinate synthase activity of the active site. 7-phospho-2-dehydro-3-deoxy-D-arabino-heptonate-binding positions include 270–274 and histidine 277; that span reads RNLVN. Histidine 277 serves as a coordination point for Zn(2+). Catalysis depends on histidine 281, which acts as the Proton acceptor; for 3-dehydroquinate synthase activity. Residues histidine 293 and lysine 362 each coordinate 7-phospho-2-dehydro-3-deoxy-D-arabino-heptonate. Histidine 293 serves as a coordination point for Zn(2+). The segment at 403-850 is EPSP synthase; that stretch reads VIPGVPRHHP…WDDLENKIGL (448 aa). Cysteine 832 functions as the For EPSP synthase activity in the catalytic mechanism. A shikimate kinase region spans residues 875 to 1070; it reads AASIILIGMR…TSGRRSYFLC (196 aa). ATP is bound at residue 882–889; sequence GMRGTGKT. The interval 1071-1296 is 3-dehydroquinase; it reads LTYPDVTQSF…AAPGQLSFKQ (226 aa). Catalysis depends on histidine 1198, which acts as the Proton acceptor; for 3-dehydroquinate dehydratase activity. The Schiff-base intermediate with substrate; for 3-dehydroquinate dehydratase activity role is filled by lysine 1226. The shikimate dehydrogenase stretch occupies residues 1309–1606; sequence AQRFYLFGTP…QFVFEEECES (298 aa).

It in the N-terminal section; belongs to the sugar phosphate cyclases superfamily. Dehydroquinate synthase family. This sequence in the 2nd section; belongs to the EPSP synthase family. The protein in the 3rd section; belongs to the shikimate kinase family. In the 4th section; belongs to the type-I 3-dehydroquinase family. It in the C-terminal section; belongs to the shikimate dehydrogenase family. As to quaternary structure, homodimer. Zn(2+) is required as a cofactor.

It localises to the cytoplasm. It catalyses the reaction 7-phospho-2-dehydro-3-deoxy-D-arabino-heptonate = 3-dehydroquinate + phosphate. It carries out the reaction 3-dehydroquinate = 3-dehydroshikimate + H2O. The enzyme catalyses shikimate + NADP(+) = 3-dehydroshikimate + NADPH + H(+). The catalysed reaction is shikimate + ATP = 3-phosphoshikimate + ADP + H(+). It catalyses the reaction 3-phosphoshikimate + phosphoenolpyruvate = 5-O-(1-carboxyvinyl)-3-phosphoshikimate + phosphate. It participates in metabolic intermediate biosynthesis; chorismate biosynthesis; chorismate from D-erythrose 4-phosphate and phosphoenolpyruvate: step 2/7. The protein operates within metabolic intermediate biosynthesis; chorismate biosynthesis; chorismate from D-erythrose 4-phosphate and phosphoenolpyruvate: step 3/7. It functions in the pathway metabolic intermediate biosynthesis; chorismate biosynthesis; chorismate from D-erythrose 4-phosphate and phosphoenolpyruvate: step 4/7. Its pathway is metabolic intermediate biosynthesis; chorismate biosynthesis; chorismate from D-erythrose 4-phosphate and phosphoenolpyruvate: step 5/7. It participates in metabolic intermediate biosynthesis; chorismate biosynthesis; chorismate from D-erythrose 4-phosphate and phosphoenolpyruvate: step 6/7. Its function is as follows. The AROM polypeptide catalyzes 5 consecutive enzymatic reactions in prechorismate polyaromatic amino acid biosynthesis. The polypeptide is Pentafunctional AROM polypeptide (Laccaria bicolor (strain S238N-H82 / ATCC MYA-4686) (Bicoloured deceiver)).